Here is a 285-residue protein sequence, read N- to C-terminus: Large ribosomal subunit protein uL2 (285 aa).

The interval 215-285 is disordered; the sequence is GRSRHKGIRP…IIRNRKGEQY (71 aa). A compositionally biased stretch (basic residues) spans 256–272; the sequence is WGKRHMGVKTRNMKKHS.

Belongs to the universal ribosomal protein uL2 family. In terms of assembly, part of the 50S ribosomal subunit. Forms a bridge to the 30S subunit in the 70S ribosome.

One of the primary rRNA binding proteins. Required for association of the 30S and 50S subunits to form the 70S ribosome, for tRNA binding and peptide bond formation. It has been suggested to have peptidyltransferase activity; this is somewhat controversial. Makes several contacts with the 16S rRNA in the 70S ribosome. The polypeptide is Large ribosomal subunit protein uL2 (Mycoplasma genitalium (strain ATCC 33530 / DSM 19775 / NCTC 10195 / G37) (Mycoplasmoides genitalium)).